The sequence spans 442 residues: tRNA(Ile)-lysidine synthase (442 aa).

27 to 32 lines the ATP pocket; it reads SGGLDS.

Belongs to the tRNA(Ile)-lysidine synthase family.

The protein resides in the cytoplasm. The enzyme catalyses cytidine(34) in tRNA(Ile2) + L-lysine + ATP = lysidine(34) in tRNA(Ile2) + AMP + diphosphate + H(+). In terms of biological role, ligates lysine onto the cytidine present at position 34 of the AUA codon-specific tRNA(Ile) that contains the anticodon CAU, in an ATP-dependent manner. Cytidine is converted to lysidine, thus changing the amino acid specificity of the tRNA from methionine to isoleucine. This is tRNA(Ile)-lysidine synthase from Photorhabdus laumondii subsp. laumondii (strain DSM 15139 / CIP 105565 / TT01) (Photorhabdus luminescens subsp. laumondii).